Consider the following 117-residue polypeptide: Probable non-functional T cell receptor gamma variable (117 aa).

An N-terminal signal peptide occupies residues 1-20 (MRWALAVLLAFLSPASQISS). The 97-residue stretch at 21 to 117 (NLEGRTKSVT…GFYYCATWDR (97 aa)) folds into the Ig-like domain. The cysteines at positions 41 and 112 are disulfide-linked. Asparagine 105 carries N-linked (GlcNAc...) asparagine glycosylation.

In terms of assembly, gamma-delta TR is a heterodimer composed of a gamma and delta chain; disulfide-linked. The gamma-delta TR is associated with the transmembrane signaling CD3 coreceptor proteins following the stoichiometry: a single gamma-delta TR heterodimer associates with one CD3D-CD3E heterodimer, one CD3G-CD3E heterodimer and one CD247 homodimer forming a stable octameric structure. Upon activation, gamma-delta TR complex associates with FCER1G to initiate intracellular signaling.

The protein resides in the cell membrane. Probable non-functional open reading frame (ORF) of V region of the variable domain of T cell receptor (TR) gamma chain. Non-functional ORF generally cannot participate in the synthesis of a productive T cell receptor (TR) chain due to altered V-(D)-J or switch recombination and/or splicing site (at mRNA level) and/or conserved amino acid change (protein level). Gamma-delta TRs recognize a variety of self and foreign non-peptide antigens frequently expressed at the epithelial boundaries between the host and external environment, including endogenous lipids presented by MH-like protein CD1D and phosphoantigens presented by butyrophilin-like molecule BTN3A1. Upon antigen recognition induces rapid, innate-like immune responses involved in pathogen clearance and tissue repair. Binding of gamma-delta TR complex to antigen triggers phosphorylation of immunoreceptor tyrosine-based activation motifs (ITAMs) in the CD3 chains by the LCK and FYN kinases, allowing the recruitment, phosphorylation, and activation of ZAP70 that facilitates phosphorylation of the scaffolding proteins LCP2 and LAT. This lead to the formation of a supramolecular signalosome that recruits the phospholipase PLCG1, resulting in calcium mobilization and ERK activation, ultimately leading to T cell expansion and differentiation into effector cells. Gamma-delta TRs are produced through somatic rearrangement of a limited repertoire of variable (V), diversity (D), and joining (J) genes. The potential diversity of gamma-delta TRs is conferred by the unique ability to rearrange (D) genes in tandem and to utilize all three reading frames. The combinatorial diversity is considerably increased by the sequence exonuclease trimming and random nucleotide (N) region additions which occur during the V-(D)-J rearrangements. The chain is Probable non-functional T cell receptor gamma variable from Homo sapiens (Human).